Reading from the N-terminus, the 223-residue chain is Ribose-5-phosphate isomerase A (223 aa).

Residues 29–32, 82–85, and 95–98 each bind substrate; these read TGST, DGAD, and KGGG. Glu-104 serves as the catalytic Proton acceptor. Substrate is bound at residue Lys-122.

The protein belongs to the ribose 5-phosphate isomerase family. As to quaternary structure, homodimer.

The enzyme catalyses aldehydo-D-ribose 5-phosphate = D-ribulose 5-phosphate. It participates in carbohydrate degradation; pentose phosphate pathway; D-ribose 5-phosphate from D-ribulose 5-phosphate (non-oxidative stage): step 1/1. Functionally, catalyzes the reversible conversion of ribose-5-phosphate to ribulose 5-phosphate. This chain is Ribose-5-phosphate isomerase A, found in Neisseria gonorrhoeae (strain ATCC 700825 / FA 1090).